Here is a 351-residue protein sequence, read N- to C-terminus: Nuclear inhibitor of protein phosphatase 1 (351 aa).

Positions 1 to 142 (MAAAVNSGSS…LPSAVKGDEK (142 aa)) are interaction with CDC5L, SF3B1 and MELK. Residues 49–101 (YLFGRNPDLCDFTIDHQSCSRVHAALVYHKHLKRVFLIDLNSTHGTFLGHIRL) form the FHA domain. The interaction with EED stretch occupies residues 143–224 (MGGEDDELKG…VDPSVGRFRN (82 aa)). The residue at position 161 (T161) is a Phosphothreonine. Residues S178 and S199 each carry the phosphoserine modification. 2 consecutive short sequence motifs (nuclear localization signal) follow at residues 185-209 (GNLD…DDEI) and 210-240 (INPE…RMEG). The interval 191 to 200 (RPKRKRKNSR) is involved in PP-1 inhibition. Residues 200 to 203 (RVTF) are involved in PP-1 binding. Position 204 is a phosphoserine (S204). S249 is subject to Phosphoserine. Y264 is subject to Phosphotyrosine. The interval 310-329 (AVAINPTPNPAVYNPEAVNE) is interaction with EED. The interval 314-351 (NPTPNPAVYNPEAVNEPKKKKYAKEAWPGKKPTPSLLI) is disordered. The segment at 330–351 (PKKKKYAKEAWPGKKPTPSLLI) is RNA-binding. The segment at 331-337 (KKKKYAK) is involved in PP-1 inhibition. Phosphotyrosine is present on Y335.

In terms of assembly, interacts with phosphorylated CDC5L, SF3B1 and MELK. Part of the spliceosome. Interacts with PPP1CA, PPP1CB and PPP1CC. Interacts with EED. Part of a complex consisting of PPP1R8, EED, HDAC2 and PP-1. Post-translationally, may be inactivated by phosphorylation on Ser-199 or Ser-204.

Its subcellular location is the nucleus. It localises to the nucleus speckle. Its function is as follows. Inhibitor subunit of the major nuclear protein phosphatase-1 (PP-1). It has RNA-binding activity but does not cleave RNA and may target PP-1 to RNA-associated substrates. May also be involved in pre-mRNA splicing. Binds DNA and might act as a transcriptional repressor. Essential for cell proliferation and early embryonic development. This is Nuclear inhibitor of protein phosphatase 1 (Ppp1r8) from Mus musculus (Mouse).